Consider the following 1069-residue polypeptide: Protocadherin-8 (1069 aa).

The signal sequence occupies residues 1–29 (MSPVKRWGSPCLFPLQLFSLCWVLSVAQS). Cadherin domains follow at residues 30–135 (KTVR…APRF), 136–245 (PRAQ…SPAF), 247–354 (QGAV…APDI), 393–497 (QETG…APLF), 498–609 (TKPV…SPVL), and 615–721 (ANGS…VPAS). At 30-747 (KTVRYSTFEE…SGPSLQWDTP (718 aa)) the chain is on the extracellular side. N-linked (GlcNAc...) asparagine glycosylation occurs at asparagine 616. The tract at residues 719–738 (PASAGSPEHFRPPGSRLAPS) is disordered. Residues 748-768 (LIVIIVLAGSCTLLLAAIIAI) traverse the membrane as a helical segment. Topologically, residues 769 to 1069 (ATTCNRRKKE…SPKKGTNENV (301 aa)) are cytoplasmic. Disordered stretches follow at residues 777–859 (KEVR…TGES), 905–927 (REAE…DSDS), and 1031–1069 (LSPP…NENV). 2 stretches are compositionally biased toward basic and acidic residues: residues 780-790 (RKGGALREERP) and 905-920 (REAE…KGDS). The residue at position 1052 (serine 1052) is a Phosphoserine.

In terms of assembly, the N-terminal extracellular domain forms homophilic interactions; these interactions activate p38 MAPK via TAOK2 and trigger endocytosis. Interacts with CDH2; this interaction may lead to CDH2 cointernalization. Interacts with CDH11. Interacts with TAOK2. Enriched in brain relative to peripheral tissues, with low expression in the testis. Expressed in hippocampal neurons (at protein level).

The protein resides in the cell membrane. It is found in the cell projection. Its subcellular location is the dendrite. It localises to the presynaptic cell membrane. The protein localises to the postsynaptic cell membrane. In terms of biological role, calcium-dependent cell-adhesion protein. May play a role in activity-induced synaptic reorganization underlying long term memory. Could be involved in CDH2 internalization through TAOK2/p38 MAPK pathway. In hippocampal neurons, may play a role in the down-regulation of dendritic spines, maybe through its action on CDH2 endocytosis. This chain is Protocadherin-8 (Pcdh8), found in Rattus norvegicus (Rat).